The sequence spans 391 residues: Ferrochelatase (391 aa).

2 residues coordinate Fe cation: histidine 196 and glutamate 281.

The protein belongs to the ferrochelatase family.

Its subcellular location is the cytoplasm. It catalyses the reaction heme b + 2 H(+) = protoporphyrin IX + Fe(2+). It participates in porphyrin-containing compound metabolism; protoheme biosynthesis; protoheme from protoporphyrin-IX: step 1/1. Its function is as follows. Catalyzes the ferrous insertion into protoporphyrin IX. The chain is Ferrochelatase from Prochlorococcus marinus subsp. pastoris (strain CCMP1986 / NIES-2087 / MED4).